The following is a 588-amino-acid chain: Progranulin (588 aa).

A signal peptide spans Met-1–Gly-17. Asn-38 carries an N-linked (GlcNAc...) asparagine glycan. 12 disulfide bridges follow: Cys-125–Cys-138, Cys-132–Cys-148, Cys-281–Cys-293, Cys-287–Cys-303, Cys-294–Cys-311, Cys-304–Cys-318, Cys-312–Cys-325, Cys-319–Cys-332, Cys-363–Cys-375, Cys-369–Cys-385, Cys-394–Cys-407, and Cys-401–Cys-413. Asn-372 carries an N-linked (GlcNAc...) asparagine glycan. Asn-525 carries N-linked (GlcNAc...) asparagine glycosylation.

It belongs to the granulin family. In terms of assembly, progranulin is secreted as a homodimer. Interacts with SLPI; interaction protects progranulin from proteolysis. Interacts (via region corresponding to granulin-7 peptide) with CTSD; stabilizes CTSD and increases its proteolytic activity. Interacts (via region corresponding to granulin-7 peptide) with SORT1; this interaction mediates endocytosis and lysosome delivery of progranulin; interaction occurs at the neuronal cell surface in a stressed nervous system. Interacts with PSAP; facilitates lysosomal delivery of progranulin from the extracellular space and the biosynthetic pathway. Forms a complex with PSAP and M6PR; PSAP bridges the binding between progranulin and M6PR. Forms a complex with PSAP and SORT1; progranulin bridges the interaction between PSAP and SORT1; facilitates lysosomal targeting of PSAP via SORT1; interaction enhances PSAP uptake in primary cortical neurons. Interacts (via regions corresponding to granulin-2 and granulin-7 peptides) with GBA1; this interaction prevents aggregation of GBA1-SCARB2 complex via interaction with HSPA1A upon stress. Interacts (via region corresponding to granulin-7 peptide) with HSPA1A; mediates recruitment of HSPA1A to GBA1 and prevents GBA1 aggregation in response to stress. Post-translationally, cleaved by ELANE; proteolysis is blocked by SLPI and is concentration- and time-dependent and induces CXCL8/IL-8 production; granulin-3 and granulin-4 are resistant to ELANE. Cleaved by CTSL in lysosome thus regulating the maturation and turnover of progranulin within the lysosome. In terms of tissue distribution, ubiquitous; most abundant in the spleen and several tissues of endocrine significance.

The protein resides in the secreted. Its subcellular location is the lysosome. Functionally, secreted protein that acts as a key regulator of lysosomal function and as a growth factor involved in inflammation, wound healing and cell proliferation. Regulates protein trafficking to lysosomes, and also the activity of lysosomal enzymes. Also facilitates the acidification of lysosomes, causing degradation of mature CTSD by CTSB. In addition, functions as a wound-related growth factor that acts directly on dermal fibroblasts and endothelial cells to promote division, migration and the formation of capillary-like tubule structures. Also promotes epithelial cell proliferation by blocking TNF-mediated neutrophil activation preventing release of oxidants and proteases. Moreover, modulates inflammation in neurons by preserving neurons survival, axonal outgrowth and neuronal integrity. In terms of biological role, inhibits epithelial cell proliferation and induces epithelial cells to secrete IL-8. Stabilizes CTSD through interaction with CTSD leading to maintain its aspartic-type peptidase activity. This is Progranulin (Grn) from Rattus norvegicus (Rat).